Here is a 201-residue protein sequence, read N- to C-terminus: Putative 3-methyladenine DNA glycosylase (201 aa).

Belongs to the DNA glycosylase MPG family.

The protein is Putative 3-methyladenine DNA glycosylase of Rhodopseudomonas palustris (strain HaA2).